Reading from the N-terminus, the 265-residue chain is 4-hydroxy-tetrahydrodipicolinate reductase (265 aa).

Residue 9–14 (GPRGRM) coordinates NAD(+). Position 37 (Arg37) interacts with NADP(+). Residues 98-100 (GTT) and 124-127 (APNF) each bind NAD(+). His154 serves as the catalytic Proton donor/acceptor. (S)-2,3,4,5-tetrahydrodipicolinate is bound at residue His155. Lys158 (proton donor) is an active-site residue. 164 to 165 (GT) contributes to the (S)-2,3,4,5-tetrahydrodipicolinate binding site.

This sequence belongs to the DapB family.

Its subcellular location is the cytoplasm. The catalysed reaction is (S)-2,3,4,5-tetrahydrodipicolinate + NAD(+) + H2O = (2S,4S)-4-hydroxy-2,3,4,5-tetrahydrodipicolinate + NADH + H(+). The enzyme catalyses (S)-2,3,4,5-tetrahydrodipicolinate + NADP(+) + H2O = (2S,4S)-4-hydroxy-2,3,4,5-tetrahydrodipicolinate + NADPH + H(+). Its pathway is amino-acid biosynthesis; L-lysine biosynthesis via DAP pathway; (S)-tetrahydrodipicolinate from L-aspartate: step 4/4. Catalyzes the conversion of 4-hydroxy-tetrahydrodipicolinate (HTPA) to tetrahydrodipicolinate. The chain is 4-hydroxy-tetrahydrodipicolinate reductase from Geobacillus thermodenitrificans (strain NG80-2).